The following is a 237-amino-acid chain: Arginine-binding periplasmic protein (237 aa).

An N-terminal signal peptide occupies residues 1–18; sequence MKKTLLTLLFGCVVTAQA.

It belongs to the bacterial solute-binding protein 3 family.

It is found in the periplasm. Binds arginine; part of the arginine periplasmic transport system. This chain is Arginine-binding periplasmic protein (lapT), found in Mannheimia haemolytica (Pasteurella haemolytica).